A 547-amino-acid chain; its full sequence is Membrane protein insertase YidC (547 aa).

Residues 8–28 (LRLILAIALSFLFIALYSYFF) form a helical membrane-spanning segment. Positions 37-50 (QTTKQETTNNHTAT) are enriched in low complexity. Residues 37 to 62 (QTTKQETTNNHTATSPNAPNAQHFST) are disordered. Residues 51–62 (SPNAPNAQHFST) show a composition bias toward polar residues. A run of 5 helical transmembrane segments spans residues 325–345 (VIEYGLITFFAKGVFVLLDYL), 348–368 (FVGNWGWAIILLTIIVRIILY), 414–434 (GANPLGGCLPLILQIPVFFAI), 449–469 (WILWIHDLSIMDPYFILPLLM), and 495–515 (LLPLLFTIFLITFPAGLVLYW).

The protein belongs to the OXA1/ALB3/YidC family. Type 1 subfamily. Interacts with the Sec translocase complex via SecD. Specifically interacts with transmembrane segments of nascent integral membrane proteins during membrane integration.

It localises to the cell inner membrane. In terms of biological role, required for the insertion and/or proper folding and/or complex formation of integral membrane proteins into the membrane. Involved in integration of membrane proteins that insert both dependently and independently of the Sec translocase complex, as well as at least some lipoproteins. Aids folding of multispanning membrane proteins. The chain is Membrane protein insertase YidC from Helicobacter pylori (strain ATCC 700392 / 26695) (Campylobacter pylori).